The following is a 447-amino-acid chain: UDP-N-acetylmuramoylalanine--D-glutamate ligase (447 aa).

Position 112-118 (112-118) interacts with ATP; the sequence is GTNGKST.

It belongs to the MurCDEF family.

It localises to the cytoplasm. The enzyme catalyses UDP-N-acetyl-alpha-D-muramoyl-L-alanine + D-glutamate + ATP = UDP-N-acetyl-alpha-D-muramoyl-L-alanyl-D-glutamate + ADP + phosphate + H(+). Its pathway is cell wall biogenesis; peptidoglycan biosynthesis. In terms of biological role, cell wall formation. Catalyzes the addition of glutamate to the nucleotide precursor UDP-N-acetylmuramoyl-L-alanine (UMA). The sequence is that of UDP-N-acetylmuramoylalanine--D-glutamate ligase from Legionella pneumophila subsp. pneumophila (strain Philadelphia 1 / ATCC 33152 / DSM 7513).